The following is a 327-amino-acid chain: Probable cell division protein WhiA (327 aa).

The segment at residues 275-308 (SLEELGRLADPPMTKDAVAGRIRRLLSMADRKAK) is a DNA-binding region (H-T-H motif).

Belongs to the WhiA family.

Functionally, involved in cell division and chromosome segregation. This chain is Probable cell division protein WhiA, found in Mycobacterium marinum (strain ATCC BAA-535 / M).